The chain runs to 457 residues: Siroheme synthase (457 aa).

The segment at 1 to 204 (MDHLPIFCQL…NDQKAITETT (204 aa)) is precorrin-2 dehydrogenase /sirohydrochlorin ferrochelatase. Residues 22-23 (DV) and 43-44 (LA) contribute to the NAD(+) site. Serine 128 bears the Phosphoserine mark. Positions 216-457 (GEVVLVGAGP…RDKLNWFSNH (242 aa)) are uroporphyrinogen-III C-methyltransferase. Proline 225 contacts S-adenosyl-L-methionine. The Proton acceptor role is filled by aspartate 248. Residue lysine 270 is the Proton donor of the active site. Residues 301 to 303 (GGD), isoleucine 306, 331 to 332 (TA), methionine 382, and glycine 411 each bind S-adenosyl-L-methionine.

The protein in the N-terminal section; belongs to the precorrin-2 dehydrogenase / sirohydrochlorin ferrochelatase family. In the C-terminal section; belongs to the precorrin methyltransferase family.

The catalysed reaction is uroporphyrinogen III + 2 S-adenosyl-L-methionine = precorrin-2 + 2 S-adenosyl-L-homocysteine + H(+). It carries out the reaction precorrin-2 + NAD(+) = sirohydrochlorin + NADH + 2 H(+). It catalyses the reaction siroheme + 2 H(+) = sirohydrochlorin + Fe(2+). It participates in cofactor biosynthesis; adenosylcobalamin biosynthesis; precorrin-2 from uroporphyrinogen III: step 1/1. The protein operates within cofactor biosynthesis; adenosylcobalamin biosynthesis; sirohydrochlorin from precorrin-2: step 1/1. Its pathway is porphyrin-containing compound metabolism; siroheme biosynthesis; precorrin-2 from uroporphyrinogen III: step 1/1. It functions in the pathway porphyrin-containing compound metabolism; siroheme biosynthesis; siroheme from sirohydrochlorin: step 1/1. It participates in porphyrin-containing compound metabolism; siroheme biosynthesis; sirohydrochlorin from precorrin-2: step 1/1. Functionally, multifunctional enzyme that catalyzes the SAM-dependent methylations of uroporphyrinogen III at position C-2 and C-7 to form precorrin-2 via precorrin-1. Then it catalyzes the NAD-dependent ring dehydrogenation of precorrin-2 to yield sirohydrochlorin. Finally, it catalyzes the ferrochelation of sirohydrochlorin to yield siroheme. The polypeptide is Siroheme synthase (Shigella flexneri).